The chain runs to 366 residues: MTPEHLPTEQYEAQLAEKVVRLQSMMAPFSDLVPEVFRSPVSHYRMRAEFRIWHDGDDLYHIIFDQQTKSRIRVDSFPAASELINQLMTAMIAGVRNNPVLRHKLFQIDYLTTLSNQAVVSLLYHKKLDDEWRQEAEALRDALRAQNLNVHLIGRATKTKIELDQDYIDERLPVAGKEMIYRQVENSFTQPNAAMNIQMLEWALDVTKGSKGDLLELYCGNGNFSLALARNFDRVLATEIAKPSVAAAQYNIAANHIDNVQIIRMAAEEFTQAMNGVREFNRLQGIDLKSYQCETIFVDPPRSGLDSETEKMVQAYPCILYISCNPETLCKNLETLSQTHKVERLALFDQFPYTHHMECGVLLTAK.

Residues Gln-190, Tyr-218, Asn-223, Glu-239, and Asp-299 each contribute to the S-adenosyl-L-methionine site. Catalysis depends on Cys-324, which acts as the Nucleophile. Glu-358 serves as the catalytic Proton acceptor.

This sequence belongs to the class I-like SAM-binding methyltransferase superfamily. RNA M5U methyltransferase family. TrmA subfamily.

It catalyses the reaction uridine(54) in tRNA + S-adenosyl-L-methionine = 5-methyluridine(54) in tRNA + S-adenosyl-L-homocysteine + H(+). It carries out the reaction uridine(341) in tmRNA + S-adenosyl-L-methionine = 5-methyluridine(341) in tmRNA + S-adenosyl-L-homocysteine + H(+). Dual-specificity methyltransferase that catalyzes the formation of 5-methyluridine at position 54 (m5U54) in all tRNAs, and that of position 341 (m5U341) in tmRNA (transfer-mRNA). The sequence is that of tRNA/tmRNA (uracil-C(5))-methyltransferase from Shigella boydii serotype 18 (strain CDC 3083-94 / BS512).